The following is a 2105-amino-acid chain: MAFTYRNPLEIAINKLPSKQSDQLLSLTTDEIEKTLEVTNRFFSFSITPEDQELLTKHGLTLAPIGFKSHSHPISKMIENHLLYICVPSLLSSFKSVAFFSLRENKVDSFLKMHSVFSHGKIKSLGMYNAIIDGKDKYRYGDVEFSSFRDRVIGLRDQCLTRNKFPKVLFLHDELHFLSPFDMAFLFETIPEIDRVVATTVFPIELLFGDKVSKEPRVYTYKVHGSSFSFYPDGVASECYEQNLANSKWPFTCSGIQWANRKIRVTKLQSLFAHHVFSFDRGRACNEFNHFDKPSCLLAEEMRLLTKRFDKAVINRSTVSSLSTYMACLKTANAASAVAKLRQLEKRDLYPDELNFVYSFGEHFKNFGMRDDFDVSVLQWVKDKFCQVMPHFIAASFFEPTEFHLNMRKLLNDLATKGIEVPLSVIILDKVNFIETRFHARMFDIAQAIGVNLDLLGKRFDYEAESEEYFSENGYIFMPSKSNPERNWILNSGSLKIDYSRLVRARRFRLRRDFLDPISKGKSPRKQLFLESTGNIKSNPNAEKNSESGEIKIEGSAENDQPHEVSHTSMETEDGQGFEGSIPVDLINCFEPEEIKLPKRRRKNDCVFKAISAHLGIDSQDLLNFLVNEDISDELLDCIEEDKGLSHEMIEEVLITKGLSMVYTSDFKEMAVLNRKYGVNGKMYCTIKGNHCELSSKECFIRLLKEGGEAQMSNENLNADSLFDLGRFVHNRDRAVKLAKSMARGTTGLLNEFDLEFCKNMVTLSELFPENFSSVVGLRLGFAGSGKTHKVLQWINYTPSVKRMFISPRRMLADEVEPQLKGTACQVHTWETALKKIDGTFMEVFVDEIGLYPPGYLTLLQMCAFRKIVKGQSENFLKGKLLELSKTCLNIRCFGDPLQLRYYSAEDTNLLDKTHDIDLMIKTIKHKYLFQGYRFGQWFQELVNMPTRVDESKFSRKFFADISSVKTEDYGLILVAKREDKGVFAGRVPVATVSESQGMTISKRVLICLDQNLFAGGANAAIVAITRSKVGFDFILKGNSLKEVQRMAQKTIWQFIIEGKSIPMERIVNMNPGASFYESPLDVGNSSIQDKASNDLFIMPFINLAEEEVDPEEVVGDVIQPVEWFKCHVPVFDTDPTLAEIFDKVAAKEKREFQSVLGLSNQFLDMEKNGCKIDILPFARQNVFPHHQASDDVTFWAGVQKRIRKSNWRREKSKFEEFESQGKELLQEFISMLPFEFKVNIKEIEDGEKSFLEKRKLKSEKMWANHSERSDIDWKLDHAFLFMKSQYCTKEGKMFTEAKAGQTLACFQHIVLFRFGPMLRAIESAFLRSCGDSYYIHSGKNFFCLDSFVTKNASVFDGFSIESDYTAFDSSQDHVILAFEMALLQYLGVSKEFQLDYLRLKLTLGCRLGSLAIMRFTGEFCTFLFNTFANMLFTQLKYKIDPRRHRILFAGDDMCSLSSLKRRRGERATRLMKSFSLTAVEEVRKFPMFCGWYLSPYGIIKSPKLLWARIKMMSERQLLKECVDNYLFEAIFAYRLGERLYTILKEEDFEYHYLVIRFFVRNSKLLTGLSKSLIFEIGEGIGSKWLSSTSTASSRRSNLQTSKLMLSRPQSFTRMQPFSNQTCLIASKGLNQTSRFPLDLVTASSCLISNCLMTPKLIQSGRKATSTNTYTMESSWLGSKQCCQTLEAWKGESLYMMEPAWIRKEATFARIFSSLSLTVATLVSGQSTVCLPQTQIWPKGLDFVWTLIVHNMNRTLSCLLLTLELHTDASTLQGFWKPKLAIQDGLHRQSAAVKHLNSMRKSRWPSWIADPRCFWKKVHQTCTLKRDCSEVTRLEGHAQFPLKGGQTQGCKKREDLGPSRLELKDLEKMSLEDVLQQARRHRVGVYLWKTHIDPAKELLTVPPPEGFKEGESFEGKELYLLLCNHYCKYLFGNIAVFGSSDKTQFPAVGFDTPPVHYNLTTTPKEGETDEGRKARAGSSGEKTKIWRIDLSNVVPELKTFAATSRQNSLNECTFRKLCEPFADLAREFLHERWSKGLATNIYKKWPKAFEKSPWVAFDFATGLKMNRLTPDEKQVIDRMTKRLFRTEGQKGVFEAGSESNLELEG.

The Alphavirus-like MT domain occupies A63–P250. Disordered stretches follow at residues F529–S548 and G555–G577. Residues L530 to E543 show a composition bias toward polar residues. Positions G555–S566 are enriched in basic and acidic residues. The 177-residue stretch at F753–L929 folds into the (+)RNA virus helicase ATP-binding domain. G781–T788 is a binding site for ATP. Residues F930–I1067 form the (+)RNA virus helicase C-terminal domain. The 109-residue stretch at G1358–E1466 folds into the RdRp catalytic domain. A V-region region spans residues W1585–K1868. Residues T1960–S1979 form a disordered region. The segment covering K1964–K1973 has biased composition (basic and acidic residues).

The N-terminus of the coat protein is blocked.

It is found in the virion. The catalysed reaction is RNA(n) + a ribonucleoside 5'-triphosphate = RNA(n+1) + diphosphate. It carries out the reaction ATP + H2O = ADP + phosphate + H(+). Its function is as follows. Replicates genomic RNA, and might as well transcribe a subgenomic RNA coding for coat protein. Coat protein: encapsidates the viral genome. Forms particles of very flexuous filaments, 619 nm long and 12 nm in width, with obvious cross-banding, helical symmetry and a pitch of c. 3.8 nm. Synthesis remains unclear: either by cleavage of the ORF1 polyprotein, or by translation of a subgenomic RNA. The chain is Genome polyprotein from Apple stem grooving virus (strain P-209) (ASGV).